The chain runs to 370 residues: Histidinol-phosphate aminotransferase (370 aa).

An N6-(pyridoxal phosphate)lysine modification is found at lysine 220.

It belongs to the class-II pyridoxal-phosphate-dependent aminotransferase family. Histidinol-phosphate aminotransferase subfamily. As to quaternary structure, homodimer. The cofactor is pyridoxal 5'-phosphate.

It catalyses the reaction L-histidinol phosphate + 2-oxoglutarate = 3-(imidazol-4-yl)-2-oxopropyl phosphate + L-glutamate. The protein operates within amino-acid biosynthesis; L-histidine biosynthesis; L-histidine from 5-phospho-alpha-D-ribose 1-diphosphate: step 7/9. This Granulibacter bethesdensis (strain ATCC BAA-1260 / CGDNIH1) protein is Histidinol-phosphate aminotransferase.